The primary structure comprises 60 residues: Large ribosomal subunit protein uL30 (60 aa).

It belongs to the universal ribosomal protein uL30 family. In terms of assembly, part of the 50S ribosomal subunit.

The protein is Large ribosomal subunit protein uL30 of Burkholderia ambifaria (strain MC40-6).